The sequence spans 391 residues: Phosphoglycerate kinase (391 aa).

Residues 21-23 (DLN), arginine 36, 59-62 (HLGR), arginine 113, and arginine 146 contribute to the substrate site. ATP contacts are provided by residues lysine 197, glutamate 319, and 345–348 (GGDT).

Belongs to the phosphoglycerate kinase family. Monomer.

It localises to the cytoplasm. It carries out the reaction (2R)-3-phosphoglycerate + ATP = (2R)-3-phospho-glyceroyl phosphate + ADP. It functions in the pathway carbohydrate degradation; glycolysis; pyruvate from D-glyceraldehyde 3-phosphate: step 2/5. The chain is Phosphoglycerate kinase from Shewanella baltica (strain OS223).